We begin with the raw amino-acid sequence, 207 residues long: High frequency lysogenization protein HflD homolog (207 aa).

This sequence belongs to the HflD family.

It localises to the cytoplasm. It is found in the cell inner membrane. This is High frequency lysogenization protein HflD homolog from Methylococcus capsulatus (strain ATCC 33009 / NCIMB 11132 / Bath).